A 468-amino-acid polypeptide reads, in one-letter code: Immunoglobulin superfamily member 21 (468 aa).

A signal peptide spans 1 to 24; that stretch reads MRAAPSLRRASCLLLAAILDLARG. 2 Ig-like domains span residues 25–132 and 344–429; these read YLTV…VVLA and PKIM…TRLI. Cysteines 46 and 116 form a disulfide.

As to quaternary structure, interacts (Ig-like 1 domain) with NRXN2 (via Laminin G-like 1 domain) in a trans-interaction manner. In terms of tissue distribution, expressed in brain.

Its subcellular location is the postsynaptic cell membrane. Functionally, involved in synaptic inhibition in the brain. Selectively regulates inhibitory presynaptic differentiation through interacting with presynaptic NRXN2. The polypeptide is Immunoglobulin superfamily member 21 (Rattus norvegicus (Rat)).